The following is a 353-amino-acid chain: Nicotinate-nucleotide--dimethylbenzimidazole phosphoribosyltransferase (353 aa).

The active-site Proton acceptor is the Glu318.

It belongs to the CobT family.

The catalysed reaction is 5,6-dimethylbenzimidazole + nicotinate beta-D-ribonucleotide = alpha-ribazole 5'-phosphate + nicotinate + H(+). It participates in nucleoside biosynthesis; alpha-ribazole biosynthesis; alpha-ribazole from 5,6-dimethylbenzimidazole: step 1/2. Catalyzes the synthesis of alpha-ribazole-5'-phosphate from nicotinate mononucleotide (NAMN) and 5,6-dimethylbenzimidazole (DMB). This Geobacter metallireducens (strain ATCC 53774 / DSM 7210 / GS-15) protein is Nicotinate-nucleotide--dimethylbenzimidazole phosphoribosyltransferase.